Consider the following 307-residue polypeptide: Aspartate carbamoyltransferase catalytic subunit (307 aa).

Arginine 54 and threonine 55 together coordinate carbamoyl phosphate. Lysine 83 is a binding site for L-aspartate. Carbamoyl phosphate-binding residues include arginine 104, histidine 132, and glutamine 135. L-aspartate-binding residues include arginine 165 and arginine 228. Positions 267 and 268 each coordinate carbamoyl phosphate.

This sequence belongs to the aspartate/ornithine carbamoyltransferase superfamily. ATCase family. In terms of assembly, heterododecamer (2C3:3R2) of six catalytic PyrB chains organized as two trimers (C3), and six regulatory PyrI chains organized as three dimers (R2).

The catalysed reaction is carbamoyl phosphate + L-aspartate = N-carbamoyl-L-aspartate + phosphate + H(+). Its pathway is pyrimidine metabolism; UMP biosynthesis via de novo pathway; (S)-dihydroorotate from bicarbonate: step 2/3. In terms of biological role, catalyzes the condensation of carbamoyl phosphate and aspartate to form carbamoyl aspartate and inorganic phosphate, the committed step in the de novo pyrimidine nucleotide biosynthesis pathway. The polypeptide is Aspartate carbamoyltransferase catalytic subunit (Clostridium botulinum (strain Okra / Type B1)).